A 57-amino-acid chain; its full sequence is Large ribosomal subunit protein bL32 (57 aa).

It belongs to the bacterial ribosomal protein bL32 family.

The polypeptide is Large ribosomal subunit protein bL32 (Mycolicibacterium gilvum (strain PYR-GCK) (Mycobacterium gilvum (strain PYR-GCK))).